Here is a 162-residue protein sequence, read N- to C-terminus: Probable chemoreceptor glutamine deamidase CheD 3 (162 aa).

Belongs to the CheD family.

It carries out the reaction L-glutaminyl-[protein] + H2O = L-glutamyl-[protein] + NH4(+). In terms of biological role, probably deamidates glutamine residues to glutamate on methyl-accepting chemotaxis receptors (MCPs), playing an important role in chemotaxis. The sequence is that of Probable chemoreceptor glutamine deamidase CheD 3 from Geobacter sulfurreducens (strain ATCC 51573 / DSM 12127 / PCA).